The chain runs to 175 residues: MIKKVPVLLFFMASISITHASQTATKSLGVSITLSKAQCKINNRAGISGSFVLPMISTSGQIISSKKFTTVPIIIDCTAGGNVNQLEITFGDNSSKKIDSTTWYTTNKDLGLRFSWTKDKTQGFNLGVAHNINKSIWLEGNKKFNASVDVSPVVIRNTVQGGQYTSALPVTVTFI.

An N-terminal signal peptide occupies residues 1–20 (MIKKVPVLLFFMASISITHA). Cysteine 39 and cysteine 77 are oxidised to a cystine.

The protein resides in the fimbrium. Involved in the biosynthesis of K99 fimbriae. This chain is Protein FanH (fanH), found in Escherichia coli.